The chain runs to 495 residues: Maintenance of mitochondrial morphology protein 1 (495 aa).

Residues 1–22 (MALQQHEPAPFAPQSSLSFTQG) lie on the Lumenal side of the membrane. A helical membrane pass occupies residues 23 to 43 (FLLGQLSVVLLIGAFIKFFIF). The Cytoplasmic portion of the chain corresponds to 44–495 (GEAPPPPSRG…PVGTPGIPDN (452 aa)). 4 disordered regions span residues 63–94 (YSSVYSPPQDSQKSLREKPSTSNVLRPVPSTS), 269–320 (ASTE…SPKS), 382–428 (WPRM…EPEG), and 440–495 (GLGA…IPDN). Composition is skewed to polar residues over residues 65–74 (SVYSPPQDSQ) and 82–94 (STSNVLRPVPSTS). The SMP-LTD domain maps to 128–379 (QPESLDWFNV…EPRVQVVGLP (252 aa)). The span at 271–289 (TEPPEPLQTPAGSPAPPTS) shows a compositional bias: pro residues. Over residues 418-428 (FSDDHGREPEG) the composition is skewed to basic and acidic residues. Positions 458-469 (RSSSMTRQQSGG) are enriched in polar residues.

This sequence belongs to the MMM1 family. Homodimer. Component of the ER-mitochondria encounter structure (ERMES) or MDM complex, composed of mmm1, mdm10, mdm12 and mdm34. An MMM1 homodimer associates with one molecule of mdm12 on each side in a pairwise head-to-tail manner, and the SMP-LTD domains of mmm1 and mdm12 generate a continuous hydrophobic tunnel for phospholipid trafficking.

The protein resides in the endoplasmic reticulum membrane. In terms of biological role, component of the ERMES/MDM complex, which serves as a molecular tether to connect the endoplasmic reticulum (ER) and mitochondria. Components of this complex are involved in the control of mitochondrial shape and protein biogenesis, and function in nonvesicular lipid trafficking between the ER and mitochondria. The mdm12-mmm1 subcomplex functions in the major beta-barrel assembly pathway that is responsible for biogenesis of all outer membrane beta-barrel proteins, and acts in a late step after the SAM complex. The mdm10-mdm12-mmm1 subcomplex further acts in the TOM40-specific pathway after the action of the mdm12-mmm1 complex. Essential for establishing and maintaining the structure of mitochondria and maintenance of mtDNA nucleoids. The sequence is that of Maintenance of mitochondrial morphology protein 1 from Penicillium rubens (strain ATCC 28089 / DSM 1075 / NRRL 1951 / Wisconsin 54-1255) (Penicillium chrysogenum).